The primary structure comprises 201 residues: Receptor expression-enhancing protein 1 (201 aa).

The next 2 membrane-spanning stretches (helical) occupy residues 1–21 (MVSW…YPAY) and 35–55 (YVKW…ETFT). At Ser152 the chain carries Phosphoserine. The disordered stretch occupies residues 158 to 201 (TIRGDGAPAPSGPPPPGTGRSSGKHSQPKMSRSASESAGSSGTA). The segment covering 188 to 201 (SRSASESAGSSGTA) has biased composition (low complexity).

The protein belongs to the DP1 family. As to quaternary structure, interacts with OLFR992. Interacts with SPAST and ATL1. Interacts (via C-terminus) with microtubules. Interacts with ZFYVE27. Detected in olfactory sensory neurons of the olfactory epithelium, and in total brain.

It localises to the membrane. The protein resides in the mitochondrion membrane. It is found in the endoplasmic reticulum. Functionally, required for endoplasmic reticulum (ER) network formation, shaping and remodeling; it links ER tubules to the cytoskeleton. May also enhance the cell surface expression of odorant receptors. This chain is Receptor expression-enhancing protein 1 (Reep1), found in Mus musculus (Mouse).